The primary structure comprises 177 residues: Coatomer subunit zeta-1 (177 aa).

The protein belongs to the adaptor complexes small subunit family. As to quaternary structure, oligomeric complex that consists of at least the alpha, beta, beta', gamma, delta, epsilon and zeta subunits.

The protein localises to the cytoplasm. Its subcellular location is the golgi apparatus membrane. It is found in the cytoplasmic vesicle. The protein resides in the COPI-coated vesicle membrane. Functionally, the coatomer is a cytosolic protein complex that binds to dilysine motifs and reversibly associates with Golgi non-clathrin-coated vesicles, which further mediate biosynthetic protein transport from the ER, via the Golgi up to the trans Golgi network. Coatomer complex is required for budding from Golgi membranes, and is essential for the retrograde Golgi-to-ER transport of dilysine-tagged proteins. The zeta subunit may be involved in regulating the coat assembly and, hence, the rate of biosynthetic protein transport due to its association-dissociation properties with the coatomer complex. The chain is Coatomer subunit zeta-1 from Arabidopsis thaliana (Mouse-ear cress).